Consider the following 344-residue polypeptide: Uroporphyrinogen decarboxylase (344 aa).

Residues 27–31, Phe-46, Asp-76, Tyr-151, Ser-206, and His-319 contribute to the substrate site; that span reads RQAGR.

Belongs to the uroporphyrinogen decarboxylase family. Homodimer.

It localises to the cytoplasm. It catalyses the reaction uroporphyrinogen III + 4 H(+) = coproporphyrinogen III + 4 CO2. The protein operates within porphyrin-containing compound metabolism; protoporphyrin-IX biosynthesis; coproporphyrinogen-III from 5-aminolevulinate: step 4/4. In terms of biological role, catalyzes the decarboxylation of four acetate groups of uroporphyrinogen-III to yield coproporphyrinogen-III. The sequence is that of Uroporphyrinogen decarboxylase from Halalkalibacterium halodurans (strain ATCC BAA-125 / DSM 18197 / FERM 7344 / JCM 9153 / C-125) (Bacillus halodurans).